Consider the following 887-residue polypeptide: Alanine--tRNA ligase (887 aa).

Zn(2+) contacts are provided by histidine 565, histidine 569, cysteine 674, and histidine 678.

The protein belongs to the class-II aminoacyl-tRNA synthetase family. The cofactor is Zn(2+).

The protein localises to the cytoplasm. It carries out the reaction tRNA(Ala) + L-alanine + ATP = L-alanyl-tRNA(Ala) + AMP + diphosphate. Functionally, catalyzes the attachment of alanine to tRNA(Ala) in a two-step reaction: alanine is first activated by ATP to form Ala-AMP and then transferred to the acceptor end of tRNA(Ala). Also edits incorrectly charged Ser-tRNA(Ala) and Gly-tRNA(Ala) via its editing domain. The protein is Alanine--tRNA ligase of Erythrobacter litoralis (strain HTCC2594).